The primary structure comprises 165 residues: Myosin regulatory light chain 2B, cardiac muscle isoform (165 aa).

Ala2 is subject to N,N,N-trimethylalanine. EF-hand domains lie at 23 to 58 (TQIQ…LGRL), 93 to 128 (DPEE…QEGR), and 129 to 164 (FSQE…GEEK). 4 residues coordinate Ca(2+): Asp36, Asn38, Asp40, and Asp47.

As to quaternary structure, myosin is a hexamer of 2 heavy chains and 4 light chains. In terms of processing, the N-terminus is blocked. N,N,N-trimethylalanine, found in other myosin light chains would not have been detected in the N-terminal tryptic peptide in PubMed:7319048 because it would remain trimethylated and ninhydrin negative after hydrolysis.

This is Myosin regulatory light chain 2B, cardiac muscle isoform from Gallus gallus (Chicken).